The following is a 348-amino-acid chain: Phenylalanine--tRNA ligase alpha subunit (348 aa).

A Mg(2+)-binding site is contributed by Glu268.

This sequence belongs to the class-II aminoacyl-tRNA synthetase family. Phe-tRNA synthetase alpha subunit type 1 subfamily. As to quaternary structure, tetramer of two alpha and two beta subunits. Mg(2+) is required as a cofactor.

Its subcellular location is the cytoplasm. It carries out the reaction tRNA(Phe) + L-phenylalanine + ATP = L-phenylalanyl-tRNA(Phe) + AMP + diphosphate + H(+). The chain is Phenylalanine--tRNA ligase alpha subunit from Bordetella bronchiseptica (strain ATCC BAA-588 / NCTC 13252 / RB50) (Alcaligenes bronchisepticus).